The primary structure comprises 430 residues: Probable dual-specificity RNA methyltransferase RlmN (430 aa).

Residue E125 is the Proton acceptor of the active site. A Radical SAM core domain is found at 152–395; sequence RHGRVTLCVS…VTVRDTRGRE (244 aa). C159 and C400 are disulfide-bonded. 3 residues coordinate [4Fe-4S] cluster: C166, C170, and C173. Residues 221 to 222, S255, 278 to 280, and N357 each bind S-adenosyl-L-methionine; these read GE and SLH. Residue C400 is the S-methylcysteine intermediate of the active site.

The protein belongs to the radical SAM superfamily. RlmN family. [4Fe-4S] cluster serves as cofactor.

Its subcellular location is the cytoplasm. The catalysed reaction is adenosine(2503) in 23S rRNA + 2 reduced [2Fe-2S]-[ferredoxin] + 2 S-adenosyl-L-methionine = 2-methyladenosine(2503) in 23S rRNA + 5'-deoxyadenosine + L-methionine + 2 oxidized [2Fe-2S]-[ferredoxin] + S-adenosyl-L-homocysteine. It carries out the reaction adenosine(37) in tRNA + 2 reduced [2Fe-2S]-[ferredoxin] + 2 S-adenosyl-L-methionine = 2-methyladenosine(37) in tRNA + 5'-deoxyadenosine + L-methionine + 2 oxidized [2Fe-2S]-[ferredoxin] + S-adenosyl-L-homocysteine. In terms of biological role, specifically methylates position 2 of adenine 2503 in 23S rRNA and position 2 of adenine 37 in tRNAs. The protein is Probable dual-specificity RNA methyltransferase RlmN of Acidothermus cellulolyticus (strain ATCC 43068 / DSM 8971 / 11B).